We begin with the raw amino-acid sequence, 90 residues long: Phenol 2-monooxygenase, stimulatory component DmpM (90 aa).

This sequence belongs to the TmoD/XamoD family. As to quaternary structure, active as a monomer. Formation of dimers inactivates the protein. The multicomponent enzyme phenol hydroxylase is formed by DmpL (P1 component), DmpM (P2 component), DmpN (P3 component), DmpO (P4 component) and DmpP (P5 component).

The enzyme catalyses phenol + NADH + O2 + H(+) = catechol + NAD(+) + H2O. It functions in the pathway aromatic compound metabolism; phenol degradation. Functionally, part of a multicomponent enzyme which catalyzes the degradation of phenol and some of its methylated derivatives. DmpM is a regulatory subunit that stimulates the phenol hydroxylase activity of the complex. The steady-state rate of phenol hydroxylase turnover is dependent on the DmpM concentration, with a maximum observed rate at about 1.5 DmpM per oxygenase monomer. Higher concentrations of DmpM inhibit phenol hydroxylase activity. May act by altering the redox potential of the oxygenase. Required for growth on phenol and for in vitro phenol hydroxylase activity. This chain is Phenol 2-monooxygenase, stimulatory component DmpM, found in Pseudomonas sp. (strain CF600).